Consider the following 172-residue polypeptide: Adenine phosphoribosyltransferase (172 aa).

This sequence belongs to the purine/pyrimidine phosphoribosyltransferase family. Homodimer.

The protein localises to the cytoplasm. The enzyme catalyses AMP + diphosphate = 5-phospho-alpha-D-ribose 1-diphosphate + adenine. It functions in the pathway purine metabolism; AMP biosynthesis via salvage pathway; AMP from adenine: step 1/1. Its function is as follows. Catalyzes a salvage reaction resulting in the formation of AMP, that is energically less costly than de novo synthesis. The protein is Adenine phosphoribosyltransferase of Malacoplasma penetrans (strain HF-2) (Mycoplasma penetrans).